We begin with the raw amino-acid sequence, 735 residues long: Nuclear intron maturase 2, mitochondrial (735 aa).

The transit peptide at methionine 1–lysine 12 directs the protein to the mitochondrion. A Reverse transcriptase domain is found at arginine 161 to leucine 460. Residues glycine 485–aspartate 653 are intron maturase type-2. The interval serine 707–methionine 735 is disordered. Positions arginine 712–glutamate 721 are enriched in basic and acidic residues.

Belongs to the plant nuclear intron maturase (nMat) family. As to quaternary structure, associated to a large ribonucleoprotein complex in mitochondria containing group-II intron RNAs.

It localises to the mitochondrion. Functionally, nuclear-encoded maturase required for splicing of group-II introns in mitochondria. Involved in the splicing of mitochondrial COX2, NAD1 and NAD7 transcripts. Necessary for mitochondrial biogenesis during early developmental stages. The sequence is that of Nuclear intron maturase 2, mitochondrial from Arabidopsis thaliana (Mouse-ear cress).